Here is a 294-residue protein sequence, read N- to C-terminus: Probable porphobilinogen deaminase (294 aa).

An S-(dipyrrolylmethanemethyl)cysteine modification is found at Cys-233.

The protein belongs to the HMBS family. Dipyrromethane serves as cofactor.

It catalyses the reaction 4 porphobilinogen + H2O = hydroxymethylbilane + 4 NH4(+). Its pathway is porphyrin-containing compound metabolism; protoporphyrin-IX biosynthesis; coproporphyrinogen-III from 5-aminolevulinate: step 2/4. In terms of biological role, tetrapolymerization of the monopyrrole PBG into the hydroxymethylbilane pre-uroporphyrinogen in several discrete steps. In Sulfurisphaera tokodaii (strain DSM 16993 / JCM 10545 / NBRC 100140 / 7) (Sulfolobus tokodaii), this protein is Probable porphobilinogen deaminase.